The sequence spans 742 residues: Kanadaptin (742 aa).

Residues methionine 1–leucine 16 are compositionally biased toward polar residues. The interval methionine 1–proline 112 is disordered. Residues valine 27–proline 43 are compositionally biased toward low complexity. Serine 28 carries the phosphoserine modification. The segment covering glycine 72 to serine 82 has biased composition (basic and acidic residues). Residue serine 90 is modified to Phosphoserine. The span at arginine 96–glycine 106 shows a compositional bias: pro residues. Residues cysteine 135–isoleucine 195 form the FHA domain. Positions leucine 254–cysteine 282 are disordered. The span at glutamate 256 to aspartate 265 shows a compositional bias: acidic residues. 2 positions are modified to phosphoserine: serine 258 and serine 412. Lysine 441 is covalently cross-linked (Glycyl lysine isopeptide (Lys-Gly) (interchain with G-Cter in SUMO2)). Positions glutamate 443 to serine 476 form a coiled coil. Serine 476 is modified (phosphoserine). The tract at residues leucine 565–tyrosine 742 is disordered. Acidic residues predominate over residues proline 591–glutamate 606. Residues lysine 607–serine 619 are compositionally biased toward basic and acidic residues. A phosphoserine mark is found at serine 655 and serine 658. Residues proline 699–leucine 708 are compositionally biased toward low complexity. Positions glycine 732–tyrosine 742 are enriched in basic and acidic residues.

As to expression, ubiquitously expressed.

It localises to the nucleus. Its subcellular location is the cytoplasm. This is Kanadaptin (SLC4A1AP) from Homo sapiens (Human).